Here is a 263-residue protein sequence, read N- to C-terminus: Pro-opiomelanocortin (263 aa).

The N-terminal stretch at 1 to 26 (MLQPVWHACILAILGVFIFHVGEVRS) is a signal peptide. Gln-27 is modified (pyrrolidone carboxylic acid). Residue Phe-87 is modified to Phenylalanine amide. An N-linked (GlcNAc...) asparagine glycan is attached at Asn-91. The propeptide occupies 107-141 (EDIANYPILNLFLGSDNQNTQEGIMEDDALDRQDS). At Val-156 the chain carries Valine amide.

The protein belongs to the POMC family. Specific enzymatic cleavages at paired basic residues yield the different active peptides.

It localises to the secreted. Stimulates the adrenal glands to release cortisol. Its function is as follows. Anorexigenic peptide. Increases the pigmentation of skin by increasing melanin production in melanocytes. Functionally, increases the pigmentation of skin by increasing melanin production in melanocytes. In terms of biological role, endogenous orexigenic opiate. Endogenous opiate. The protein is Pro-opiomelanocortin (pomc) of Aquarana catesbeiana (American bullfrog).